Here is a 156-residue protein sequence, read N- to C-terminus: RNA polymerase sigma factor SigS (156 aa).

Residues 29–44 (EYYQLLLIKMWQLSQI) carry the Polymerase core binding motif. The H-T-H motif DNA-binding region spans 126-145 (QFEIAEIMSLSLSTIKLIKM).

The protein belongs to the sigma-70 factor family.

Sigma factors are initiation factors that promote the attachment of RNA polymerase to specific initiation sites and are then released. Sigma-S contributes to the protection against external stress, thus playing a role in cellular fitness and survival. The chain is RNA polymerase sigma factor SigS (sigS) from Staphylococcus aureus (strain NCTC 8325 / PS 47).